Consider the following 314-residue polypeptide: tRNA dimethylallyltransferase (314 aa).

13 to 20 (GPTAIGKT) lines the ATP pocket. Substrate is bound at residue 15–20 (TAIGKT). The interaction with substrate tRNA stretch occupies residues 38 to 41 (DSMQ).

The protein belongs to the IPP transferase family. As to quaternary structure, monomer. Requires Mg(2+) as cofactor.

The catalysed reaction is adenosine(37) in tRNA + dimethylallyl diphosphate = N(6)-dimethylallyladenosine(37) in tRNA + diphosphate. In terms of biological role, catalyzes the transfer of a dimethylallyl group onto the adenine at position 37 in tRNAs that read codons beginning with uridine, leading to the formation of N6-(dimethylallyl)adenosine (i(6)A). The polypeptide is tRNA dimethylallyltransferase (Desulfotalea psychrophila (strain LSv54 / DSM 12343)).